The primary structure comprises 436 residues: Protein translocase subunit SecY (436 aa).

The next 8 membrane-spanning stretches (helical) occupy residues 17–37, 72–92, 122–142, 146–166, 209–229, 269–289, 309–329, and 380–400; these read ILLT…PVPY, FGLL…IQLL, TFFW…EVIF, LQVY…VLWF, FSNI…CIYI, VMPL…FEII, ISYW…IFFF, and IFLI…NLNI.

Belongs to the SecY/SEC61-alpha family. In terms of assembly, component of the plastid Sec protein translocase complex, which is composed of at least SecY and SecE.

It localises to the plastid. The protein resides in the chloroplast thylakoid membrane. In terms of biological role, the central subunit of the protein translocation channel SecYE. Consists of two halves. These two domains form a lateral gate at the front which open onto the bilayer between TMs 2 and 7, and are clamped together by SecE at the back. The channel is closed by both a pore ring composed of hydrophobic SecY resides and a short helix (helix 2A) on the extracellular side of the membrane which forms a plug. The protein is Protein translocase subunit SecY of Vaucheria litorea (Yellow-green alga).